We begin with the raw amino-acid sequence, 156 residues long: Protein-export protein SecB (156 aa).

The protein belongs to the SecB family. Homotetramer, a dimer of dimers. One homotetramer interacts with 1 SecA dimer.

The protein resides in the cytoplasm. Its function is as follows. One of the proteins required for the normal export of preproteins out of the cell cytoplasm. It is a molecular chaperone that binds to a subset of precursor proteins, maintaining them in a translocation-competent state. It also specifically binds to its receptor SecA. The protein is Protein-export protein SecB of Yersinia enterocolitica serotype O:8 / biotype 1B (strain NCTC 13174 / 8081).